A 263-amino-acid chain; its full sequence is Small ribosomal subunit protein uS2 (263 aa).

It belongs to the universal ribosomal protein uS2 family.

In Hyphomonas neptunium (strain ATCC 15444), this protein is Small ribosomal subunit protein uS2.